The primary structure comprises 238 residues: 2,3,4,5-tetrahydropyridine-2,6-dicarboxylate N-acetyltransferase (238 aa).

Belongs to the transferase hexapeptide repeat family. DapH subfamily.

It catalyses the reaction (S)-2,3,4,5-tetrahydrodipicolinate + acetyl-CoA + H2O = L-2-acetamido-6-oxoheptanedioate + CoA. It participates in amino-acid biosynthesis; L-lysine biosynthesis via DAP pathway; LL-2,6-diaminopimelate from (S)-tetrahydrodipicolinate (acetylase route): step 1/3. Catalyzes the transfer of an acetyl group from acetyl-CoA to tetrahydrodipicolinate. This is 2,3,4,5-tetrahydropyridine-2,6-dicarboxylate N-acetyltransferase from Clostridioides difficile (strain 630) (Peptoclostridium difficile).